Reading from the N-terminus, the 125-residue chain is uncharacterized protein (125 aa).

The tract at residues 50–73 (QTSDFSDESSRSDSSSVTNENEVS) is disordered.

This is an uncharacterized protein from Microplitis demolitor (Parasitoid wasp).